The following is a 441-amino-acid chain: Ribosomal protein uS12 methylthiotransferase RimO (441 aa).

An MTTase N-terminal domain is found at 7-117 (PKISFVSLGC…VLEAVHRASP (111 aa)). [4Fe-4S] cluster contacts are provided by Cys-16, Cys-52, Cys-81, Cys-148, Cys-152, and Cys-155. A Radical SAM core domain is found at 134 to 371 (LTPRHYAYLK…MARQQKISAR (238 aa)). The 67-residue stretch at 374–440 (KRKVGTRQQI…EYDLHGTVAG (67 aa)) folds into the TRAM domain.

This sequence belongs to the methylthiotransferase family. RimO subfamily. Requires [4Fe-4S] cluster as cofactor.

Its subcellular location is the cytoplasm. The enzyme catalyses L-aspartate(89)-[ribosomal protein uS12]-hydrogen + (sulfur carrier)-SH + AH2 + 2 S-adenosyl-L-methionine = 3-methylsulfanyl-L-aspartate(89)-[ribosomal protein uS12]-hydrogen + (sulfur carrier)-H + 5'-deoxyadenosine + L-methionine + A + S-adenosyl-L-homocysteine + 2 H(+). Catalyzes the methylthiolation of an aspartic acid residue of ribosomal protein uS12. This Bradyrhizobium sp. (strain BTAi1 / ATCC BAA-1182) protein is Ribosomal protein uS12 methylthiotransferase RimO.